An 81-amino-acid chain; its full sequence is NADH-ubiquinone oxidoreductase chain 6 (81 aa).

A run of 3 helical transmembrane segments spans residues 1–21 (MTYF…GVAS), 27–47 (YGVV…LSLG), and 48–68 (VSFV…VVFV).

This sequence belongs to the complex I subunit 6 family.

Its subcellular location is the mitochondrion membrane. The catalysed reaction is a ubiquinone + NADH + 5 H(+)(in) = a ubiquinol + NAD(+) + 4 H(+)(out). Its function is as follows. Core subunit of the mitochondrial membrane respiratory chain NADH dehydrogenase (Complex I) that is believed to belong to the minimal assembly required for catalysis. Complex I functions in the transfer of electrons from NADH to the respiratory chain. The immediate electron acceptor for the enzyme is believed to be ubiquinone. The chain is NADH-ubiquinone oxidoreductase chain 6 (MT-ND6) from Anas platyrhynchos (Mallard).